The sequence spans 280 residues: Soluble inorganic pyrophosphatase 1, chloroplastic (280 aa).

A diphosphate-binding site is contributed by Arg-120. Residues Asp-152, Asp-157, and Asp-189 each contribute to the Mg(2+) site.

Monomer. The cofactor is Mg(2+). In terms of processing, the N-terminus is blocked.

The protein resides in the plastid. The protein localises to the chloroplast. The enzyme catalyses diphosphate + H2O = 2 phosphate + H(+). The chain is Soluble inorganic pyrophosphatase 1, chloroplastic (ppa1) from Chlamydomonas reinhardtii (Chlamydomonas smithii).